Consider the following 500-residue polypeptide: Maturase K (500 aa).

Belongs to the intron maturase 2 family. MatK subfamily.

The protein localises to the plastid. It is found in the chloroplast. In terms of biological role, usually encoded in the trnK tRNA gene intron. Probably assists in splicing its own and other chloroplast group II introns. The polypeptide is Maturase K (Prunus laurocerasus (Cherry laurel)).